The primary structure comprises 1866 residues: RNA1 polyprotein (1866 aa).

An SF3 helicase domain is found at 462 to 633; it reads LKGINDLEQL…KAYDAANFAS (172 aa). An ATP-binding site is contributed by 494–501; that stretch reads GKSRTGKS. Residues 897–917 traverse the membrane as a helical segment; that stretch reads LVGSGNGPVLMGVAAGAFSAE. Residue S920 is modified to O-(5'-phospho-RNA)-serine. One can recognise a Peptidase C3 domain in the interval 945 to 1150; the sequence is DAQMSLDQSS…CASLLPPLEP (206 aa). Residues H987, E1023, and C1113 each act as for picornain 3C-like protease activity in the active site. Positions 1429 to 1559 constitute a RdRp catalytic domain; the sequence is NDVLCCDYSS…SVNAVVTPYF (131 aa).

Post-translationally, specific enzymatic cleavages by picornain 3C-like protease in vivo yield mature proteins. Picornain 3C-like protease is autocatalytically processed. In terms of processing, uridylylated by the polymerase and is covalently linked to the 5'-end of genomic RNA. This uridylylated form acts as a nucleotide-peptide primer for the polymerase.

The protein localises to the host membrane. The protein resides in the host cytoplasm. It is found in the host perinuclear region. Its subcellular location is the host endoplasmic reticulum. It catalyses the reaction RNA(n) + a ribonucleoside 5'-triphosphate = RNA(n+1) + diphosphate. Its function is as follows. Thiol protease that cleaves the RNA1 and RNA2 polyproteins. In terms of biological role, plays a role in RNA replication. It is covalently linked to the 5'terminus of both viral single-stranded RNA1 and RNA2 molecules. Down-regulates the RNA1 polyprotein processing and enhances trans-cleavage of RNA2 polyproteins. The protease cofactor and the putative helicase seem to target the replication complexes to ER membranes. Their physical association causes the membrane rearrangement of host ER that may result in formation of the small membranous vesicles that are the site of viral RNA synthesis. Functionally, the protease cofactor and the putative helicase seem to target the replication complexes to ER membranes. Their physical association causes the membrane rearrangement of host ER that may result in formation of the small membranous vesicles that are the site of viral RNA synthesis. Its function is as follows. Replicates the viral genome. This Cajanus cajan (Pigeon pea) protein is RNA1 polyprotein.